A 522-amino-acid chain; its full sequence is Sugar carrier protein A (522 aa).

Residues 1 to 22 (MAGGSLAPAGVAKERAEQYQGK) are Cytoplasmic-facing. Helical transmembrane passes span 23 to 43 (VTFAVFVACMVAAVGGSIFGY), 87 to 107 (AFTSSLYLAGLAASLVAGPIT), 121 to 141 (ISFLIGAALNATAINLAMLLL), 144 to 164 (IMLGVGIGFGNQAVPLYLSEM), 173 to 193 (LNIMFQLATTSGIFTANMVNY), 205 to 225 (LSLGLAAAPALLMTIGGLLLP), 286 to 306 (LVMAIFMPTFQILTGINIILF), 322 to 342 (ALYSSAVTGAVLCSSTFISIA), 351 to 371 (FLLISGGIQMITCQVIVAIIL), 384 to 404 (SFSVLVVIMICLFVLAFGWSW), 430 to 450 (AVNLFFTFVIAQSFPSLLCAF), and 453 to 473 (GIFLFFAGWVTVMTAFVYIFL). Residues 474–522 (PETKGVPIEEMIFLWRKHWFWKKIVPGQPEVDDSRESMEMGEAVASRIK) are Cytoplasmic-facing.

It belongs to the major facilitator superfamily. Sugar transporter (TC 2.A.1.1) family.

The protein resides in the membrane. This chain is Sugar carrier protein A (STA), found in Ricinus communis (Castor bean).